Reading from the N-terminus, the 119-residue chain is Large ribosomal subunit protein eL31z (119 aa).

Belongs to the eukaryotic ribosomal protein eL31 family.

The chain is Large ribosomal subunit protein eL31z (RPL31A) from Arabidopsis thaliana (Mouse-ear cress).